A 274-amino-acid polypeptide reads, in one-letter code: Carboxy-S-adenosyl-L-methionine synthase (274 aa).

Residues Tyr-59, 93–95 (GCS), 149–150 (DI), Asn-164, and Arg-231 each bind S-adenosyl-L-methionine.

Belongs to the class I-like SAM-binding methyltransferase superfamily. Cx-SAM synthase family. In terms of assembly, homodimer.

It catalyses the reaction prephenate + S-adenosyl-L-methionine = carboxy-S-adenosyl-L-methionine + 3-phenylpyruvate + H2O. Functionally, catalyzes the conversion of S-adenosyl-L-methionine (SAM) to carboxy-S-adenosyl-L-methionine (Cx-SAM). In Psychrobacter sp. (strain PRwf-1), this protein is Carboxy-S-adenosyl-L-methionine synthase.